Reading from the N-terminus, the 340-residue chain is UPF0324 membrane protein BC_5174 (340 aa).

A run of 10 helical transmembrane segments spans residues 13-35 (FGFS…LAEL), 40-59 (IMGQ…AAIG), 99-118 (VLVI…YGLT), 128-150 (GILT…APQV), 157-179 (TAVG…TLLY), 189-211 (YGVF…APGG), 218-240 (AVIV…GLWF), 255-277 (LPIP…GIIP), 279-301 (VVAG…GLGL), and 316-338 (FVAG…YALG).

Belongs to the UPF0324 family.

The protein resides in the cell membrane. This is UPF0324 membrane protein BC_5174 from Bacillus cereus (strain ATCC 14579 / DSM 31 / CCUG 7414 / JCM 2152 / NBRC 15305 / NCIMB 9373 / NCTC 2599 / NRRL B-3711).